The chain runs to 374 residues: Chaperone protein DnaJ (374 aa).

A J domain is found at 4-68; that stretch reads DYYEILGVSR…ETRNRYDRFG (65 aa). The segment at 133-215 adopts a CR-type zinc-finger fold; the sequence is GGEKEIRIRH…CGGSGRRQET (83 aa). Residues cysteine 146, cysteine 149, cysteine 163, cysteine 166, cysteine 189, cysteine 192, cysteine 203, and cysteine 206 each coordinate Zn(2+). CXXCXGXG motif repeat units lie at residues 146 to 153, 163 to 170, 189 to 196, and 203 to 210; these read CQTCKGSG, CTTCSGTG, CPTCDGAG, and CDVCGGSG.

The protein belongs to the DnaJ family. In terms of assembly, homodimer. Zn(2+) serves as cofactor.

Its subcellular location is the cytoplasm. Functionally, participates actively in the response to hyperosmotic and heat shock by preventing the aggregation of stress-denatured proteins and by disaggregating proteins, also in an autonomous, DnaK-independent fashion. Unfolded proteins bind initially to DnaJ; upon interaction with the DnaJ-bound protein, DnaK hydrolyzes its bound ATP, resulting in the formation of a stable complex. GrpE releases ADP from DnaK; ATP binding to DnaK triggers the release of the substrate protein, thus completing the reaction cycle. Several rounds of ATP-dependent interactions between DnaJ, DnaK and GrpE are required for fully efficient folding. Also involved, together with DnaK and GrpE, in the DNA replication of plasmids through activation of initiation proteins. The sequence is that of Chaperone protein DnaJ from Microcystis aeruginosa (strain NIES-843 / IAM M-2473).